A 254-amino-acid chain; its full sequence is Photosystem II 22 kDa protein 2, chloroplastic (254 aa).

The N-terminal 38 residues, 1–38 (MALQQSMAMPMMVVSDLGTAPRSSPMVQLQRMKKHLVV), are a transit peptide targeting the chloroplast. 2 consecutive repeat copies span residues 42-148 (FKSR…FVDD) and 149-253 (ATGL…DNDD). A run of 4 helical transmembrane segments spans residues 86–106 (VAML…KGIL), 120–140 (AEPL…GALG), 184–204 (LFVG…EIIT), and 219–239 (PINE…FAAI).

It belongs to the ELIP/psbS family.

Its subcellular location is the plastid. It localises to the chloroplast thylakoid membrane. Functionally, involved in high light-mediated energy-dependent nonphotochemical quenching (NPQ, qE) and thermal dissipation (TD) thus regulating energy conversion in photosystem II and protecting from photoinhibition. Also seems to regulate quantum yield of electron transport in fluctuating light conditions. This is Photosystem II 22 kDa protein 2, chloroplastic from Oryza sativa subsp. japonica (Rice).